Consider the following 52-residue polypeptide: MPQMAPLLWLNLFLMFSATFVMFIVLNYFIKVPSKIEKSSSQLQKMEMTWKW.

The helical transmembrane segment at 6–26 threads the bilayer; that stretch reads PLLWLNLFLMFSATFVMFIVL.

The protein belongs to the ATPase protein 8 family. As to quaternary structure, F-type ATPases have 2 components, CF(1) - the catalytic core - and CF(0) - the membrane proton channel.

It is found in the mitochondrion membrane. Mitochondrial membrane ATP synthase (F(1)F(0) ATP synthase or Complex V) produces ATP from ADP in the presence of a proton gradient across the membrane which is generated by electron transport complexes of the respiratory chain. F-type ATPases consist of two structural domains, F(1) - containing the extramembraneous catalytic core and F(0) - containing the membrane proton channel, linked together by a central stalk and a peripheral stalk. During catalysis, ATP synthesis in the catalytic domain of F(1) is coupled via a rotary mechanism of the central stalk subunits to proton translocation. Part of the complex F(0) domain. Minor subunit located with subunit a in the membrane. The sequence is that of ATP synthase protein 8 (MT-ATP8) from Penaeus monodon (Giant tiger prawn).